The sequence spans 544 residues: Chaperonin GroEL 2 (544 aa).

ATP-binding positions include 29 to 32, 86 to 90, Gly413, 479 to 481, and Asp495; these read TLGP, DGTTT, and NAA.

This sequence belongs to the chaperonin (HSP60) family. Forms a cylinder of 14 subunits composed of two heptameric rings stacked back-to-back. Interacts with the co-chaperonin GroES.

It is found in the cytoplasm. The enzyme catalyses ATP + H2O + a folded polypeptide = ADP + phosphate + an unfolded polypeptide.. In terms of biological role, together with its co-chaperonin GroES, plays an essential role in assisting protein folding. The GroEL-GroES system forms a nano-cage that allows encapsulation of the non-native substrate proteins and provides a physical environment optimized to promote and accelerate protein folding. This is Chaperonin GroEL 2 from Prochlorococcus marinus (strain MIT 9515).